Reading from the N-terminus, the 61-residue chain is Temporin-SN3 (61 aa).

The signal sequence occupies residues 1-22 (MFTLKKTLLLLFFLGTINLSLC). The propeptide at 23 to 44 (EEERNAEEERRDGDDEMDVEVK) is removed in mature form. Position 61 is a lysine amide (lysine 61).

Belongs to the frog skin active peptide (FSAP) family. Temporin subfamily. As to expression, expressed by the skin glands.

The protein resides in the secreted. Antimicrobial peptide. Active against some Gram-positive and Gram-negative bacterial strains. Active against fungus C.glabrata 090902 but not against C.albicans ATCC 12231. Shows weak hemolytic activity against human erythrocytes. This chain is Temporin-SN3, found in Sylvirana spinulosa (Fine-spined frog).